The sequence spans 83 residues: Mu-theraphotoxin-Hhn2c (83 aa).

A signal peptide spans 1–21 (MKASMFLALAGLVLLFVVGYA). Positions 22 to 48 (SESEEKEFPIELLSKIFAVDVFKGEER) are excised as a propeptide. 3 cysteine pairs are disulfide-bonded: C50–C65, C57–C70, and C64–C77. L81 is modified (leucine amide).

This sequence belongs to the neurotoxin 10 (Hwtx-1) family. 15 (Hntx-3) subfamily. Monomer. As to expression, expressed by the venom gland.

It localises to the secreted. In terms of biological role, lethal neurotoxin. Selectively blocks tetrodotoxin-sensitive voltage-gated sodium channels (Nav). Does not affect tetrodotoxin-resistant voltage-gated sodium channels or calcium channels. This Cyriopagopus hainanus (Chinese bird spider) protein is Mu-theraphotoxin-Hhn2c.